Consider the following 263-residue polypeptide: Formamidopyrimidine-DNA glycosylase (263 aa).

Pro2 acts as the Schiff-base intermediate with DNA in catalysis. The active-site Proton donor is the Glu3. Lys59 functions as the Proton donor; for beta-elimination activity in the catalytic mechanism. DNA-binding residues include His93 and Arg111. An FPG-type zinc finger spans residues 229 to 263 (KVYGKNGSLCVRCNNVLIRERHAGRSTHYCPHCQK). Arg253 serves as the catalytic Proton donor; for delta-elimination activity.

Belongs to the FPG family. In terms of assembly, monomer. Zn(2+) is required as a cofactor.

The catalysed reaction is Hydrolysis of DNA containing ring-opened 7-methylguanine residues, releasing 2,6-diamino-4-hydroxy-5-(N-methyl)formamidopyrimidine.. It catalyses the reaction 2'-deoxyribonucleotide-(2'-deoxyribose 5'-phosphate)-2'-deoxyribonucleotide-DNA = a 3'-end 2'-deoxyribonucleotide-(2,3-dehydro-2,3-deoxyribose 5'-phosphate)-DNA + a 5'-end 5'-phospho-2'-deoxyribonucleoside-DNA + H(+). Its function is as follows. Involved in base excision repair of DNA damaged by oxidation or by mutagenic agents. Acts as a DNA glycosylase that recognizes and removes damaged bases. Has a preference for oxidized purines, such as 7,8-dihydro-8-oxoguanine (8-oxoG). Has AP (apurinic/apyrimidinic) lyase activity and introduces nicks in the DNA strand. Cleaves the DNA backbone by beta-delta elimination to generate a single-strand break at the site of the removed base with both 3'- and 5'-phosphates. The chain is Formamidopyrimidine-DNA glycosylase from Carboxydothermus hydrogenoformans (strain ATCC BAA-161 / DSM 6008 / Z-2901).